The primary structure comprises 518 residues: MFKIMKDFTEQEKIIVLDFGSQYNQLITRRIREFGVYSELHPHTITVEEMKALNPTGIIFSGGPNSVYDEDAFRADERIFDMGIPILGICYGMQLMTTHFGGKVERAKDREYGKADIHVEKPNRLFAGLPTDQVVWMSHGDLVVEEPAGFEVTVTSKSCPIAGIADEERSLYGVQFHPEVRHSVYGNELLKNFALNVCGCKGDWTMENFSEVEIAKIQEIVGDKKVLLALSGGVDSSVVGVLIHKAIGDQLTCIFVDHGLLRKGEADQVMETLQGEFNMNIIKVDAKKRFMDKLAGVSDPEQKRKIIGNEFIYVFDDEANKLDGVEFLAQGTLYTDIIESGTATAQTIKSHHNVGGLPEDMQFKLIEPLNTLFKDEVRALGTELGMPDAIVWRQPFPGPGLGIRVLGEITEEKLEIVRDSDYILREEIKNAGLEREIWQYFTALPNIRSVGVMGDGRTYDHTVVVRAVTSIDGMTADWARIPWDVLEKISVRIVNEVDHVNRVVYDITSKPPATVEWE.

One can recognise a Glutamine amidotransferase type-1 domain in the interval 13-203; that stretch reads KIIVLDFGSQ…ALNVCGCKGD (191 aa). Cysteine 90 functions as the Nucleophile in the catalytic mechanism. Catalysis depends on residues histidine 177 and glutamate 179. Residues 204–393 enclose the GMPS ATP-PPase domain; that stretch reads WTMENFSEVE…LGMPDAIVWR (190 aa). Residue 231-237 participates in ATP binding; sequence SGGVDSS.

Homodimer.

It catalyses the reaction XMP + L-glutamine + ATP + H2O = GMP + L-glutamate + AMP + diphosphate + 2 H(+). It participates in purine metabolism; GMP biosynthesis; GMP from XMP (L-Gln route): step 1/1. Functionally, catalyzes the synthesis of GMP from XMP. This Listeria monocytogenes serovar 1/2a (strain ATCC BAA-679 / EGD-e) protein is GMP synthase [glutamine-hydrolyzing].